We begin with the raw amino-acid sequence, 154 residues long: NSGYSNIHNEMLFDFVVFVFTGPRTRKVKRREKKADEKRPRTAFSASQLQRLKQEFQQSNYLTEQRRRSLAKELTLSESQIKIWFQNKRAKIKKASGLKNDLARQLMAQGLYNHSTVPLEADSMDTKLLNGQNTSGDCSRSDYTSDSDGDSLTH.

A DNA-binding region (homeobox) is located at residues 37-96; that stretch reads EKRPRTAFSASQLQRLKQEFQQSNYLTEQRRRSLAKELTLSESQIKIWFQNKRAKIKKAS. A disordered region spans residues 127–154; sequence KLLNGQNTSGDCSRSDYTSDSDGDSLTH. The span at 129–144 shows a compositional bias: polar residues; sequence LNGQNTSGDCSRSDYT. Residues 145 to 154 are compositionally biased toward acidic residues; it reads SDSDGDSLTH.

This sequence belongs to the engrailed homeobox family.

Its subcellular location is the nucleus. In Tripneustes gratilla (Hawaian sea urchin), this protein is Homeobox protein engrailed (EN).